The primary structure comprises 461 residues: Nuclear distribution protein PAC1 (461 aa).

Positions 9-41 (QAEELHKAIIAYLSANNLSSSATALRTELGLAE) constitute a LisH domain. The stretch at 61–88 (TSVVRLQKKIMDLESRNNALQSELDNAT) forms a coiled coil. WD repeat units follow at residues 114-155 (SHQN…RTIK), 157-197 (HTRP…KNIR), 201-248 (GHDH…CLKT), 251-290 (GHTA…PENR), 295-355 (GHDH…LKTL), 357-396 (GHDN…KCVK), 401-444 (VHER…VRIR), and 446-461 (VIAT…IFAN).

This sequence belongs to the WD repeat LIS1/nudF family. As to quaternary structure, self-associates. Interacts with NDL1 and dynein.

It is found in the cytoplasm. The protein resides in the cytoskeleton. Its subcellular location is the spindle pole. Positively regulates the activity of the minus-end directed microtubule motor protein dynein. May enhance dynein-mediated microtubule sliding by targeting dynein to the microtubule plus end. Required for nuclear migration during vegetative growth as well as development. Required for retrograde early endosome (EE) transport from the hyphal tip. Required for localization of dynein to the mitotic spindle poles. Recruits additional proteins to the dynein complex at SPBs. The chain is Nuclear distribution protein PAC1 from Pyricularia oryzae (strain 70-15 / ATCC MYA-4617 / FGSC 8958) (Rice blast fungus).